The following is a 187-amino-acid chain: Ribosome-recycling factor (187 aa).

The protein belongs to the RRF family.

Its subcellular location is the cytoplasm. Responsible for the release of ribosomes from messenger RNA at the termination of protein biosynthesis. May increase the efficiency of translation by recycling ribosomes from one round of translation to another. This Flavobacterium psychrophilum (strain ATCC 49511 / DSM 21280 / CIP 103535 / JIP02/86) protein is Ribosome-recycling factor.